Reading from the N-terminus, the 441-residue chain is MSSTIFYRFKSQRNTSRILFDGTGLTVFDLKREIIQENKLGDGTDFQLKIYNPDTEEEYDDDAFVIPRSTSVIVKRSPAIKSFSVHSRLKGNVGAAALGNATRYVTGRPRVLQKRQHTATTTANVSGTTEEERIASMFATQENQWEQTQEEMSAATPVFFKSQTNKNSAQENEGPPPPGYMCYRCGGRDHWIKNCPTNSDPNFEGKRIRRTTGIPKKFLKSIEIDPETMTPEEMAQRKIMITDEGKFVVQVEDKQSWEDYQRKRENRQIDGDETIWRKGHFKDLPDDLKCPLTGGLLRQPVKTSKCCNIDFSKEALENALVESDFVCPNCETRDILLDSLVPDQDKEKEVETFLKKQEELHGSSKDGNQPETKKMKLMDPTGTAGLNNNTSLPTSVNNGGTPVPPVPLPFGIPPFPMFPMPFMPPTATITNPHQADASPKK.

One can recognise a DWNN domain in the interval 5–78 (IFYRFKSQRN…STSVIVKRSP (74 aa)). Residues 180 to 197 (YMCYRCGGRDHWIKNCPT) form a CCHC-type zinc finger. At Ser-221 the chain carries Phosphoserine. The span at 355-364 (KKQEELHGSS) shows a compositional bias: basic and acidic residues. The tract at residues 355-400 (KKQEELHGSSKDGNQPETKKMKLMDPTGTAGLNNNTSLPTSVNNGG) is disordered. The segment covering 384-400 (AGLNNNTSLPTSVNNGG) has biased composition (polar residues).

As to quaternary structure, component of the cleavage and polyadenylation factor (CPF) complex, which is composed of PTI1, SYC1, SSU72, GLC7, MPE1, REF2, PFS2, PTA1, YSH1/BRR5, SWD2, CFT2/YDH1, YTH1, CFT1/YHH1, FIP1 and PAP1.

Its subcellular location is the nucleus. Its function is as follows. Component of the cleavage and polyadenylation factor (CPF) complex, which plays a key role in polyadenylation-dependent pre-mRNA 3'-end formation and cooperates with cleavage factors including the CFIA complex and NAB4/CFIB. This Saccharomyces cerevisiae (strain ATCC 204508 / S288c) (Baker's yeast) protein is Protein MPE1 (MPE1).